A 272-amino-acid chain; its full sequence is Hemin import ATP-binding protein HmuV (272 aa).

One can recognise an ABC transporter domain in the interval 2 to 255 (LNADHLHVAR…EPIARCYGFR (254 aa)). 34 to 41 (GRNGAGKS) is an ATP binding site.

The protein belongs to the ABC transporter superfamily. Heme (hemin) importer (TC 3.A.1.14.5) family. As to quaternary structure, the complex is composed of two ATP-binding proteins (HmuV), two transmembrane proteins (HmuU) and a solute-binding protein (HmuT).

The protein resides in the cell inner membrane. In terms of biological role, part of the ABC transporter complex HmuTUV involved in hemin import. Responsible for energy coupling to the transport system. In Burkholderia mallei (strain ATCC 23344), this protein is Hemin import ATP-binding protein HmuV.